A 79-amino-acid polypeptide reads, in one-letter code: Conotoxin 8 (79 aa).

A signal peptide spans 1–22 (MKLTCVLIITVLFLTASQLITA). Positions 23–47 (DYSRGQRQYRAVRLGDEMRNFKGAR) are excised as a propeptide. 3 cysteine pairs are disulfide-bonded: cysteine 49/cysteine 62, cysteine 56/cysteine 67, and cysteine 61/cysteine 77.

This sequence belongs to the conotoxin O1 superfamily. Expressed by the venom duct.

The protein localises to the secreted. The chain is Conotoxin 8 from Conus vexillum (Flag cone).